The chain runs to 227 residues: E3 ubiquitin-protein ligase ZNRF1 (227 aa).

Residues 1-38 form a disordered region; sequence MGGKQSTAARSRGPFPGVSTDDSAVPPPGGAPHFGHYR. A lipid anchor (N-myristoyl glycine) is attached at glycine 2. The tract at residues 2 to 10 is required for endosomal and lysosomal localization and myristoylation; that stretch reads GGKQSTAAR. Serine 50, serine 52, and serine 53 each carry phosphoserine. A disordered region spans residues 77–105; that stretch reads RGAGDAERAPGSGGSASDSTYAHGNGYQE. Phosphotyrosine is present on tyrosine 103. A Phosphoserine modification is found at serine 123. The RING-type; atypical zinc finger occupies 184–225; the sequence is CVICLEELLQGDTIARLPCLCIYHKSCIDSWFEVNRSCPEHP.

As to quaternary structure, interacts with AKT1, GLUL and TUBB2A. Interacts with ZNRF2. Interacts (via its RING domain) with UBE2N. Interacts (when phosphorylated) with YWHAE. In terms of processing, N-myristoylation targets ZNRF1 to intracellular membranes. Post-translationally, phosphorylated by SRC at Tyr-103; leading to 'Lys-63'-linked ubiquitination of TLR3, lysosomal trafficking and degradation.

Its subcellular location is the endosome. The protein localises to the lysosome. It is found in the membrane. The protein resides in the cytoplasmic vesicle. It localises to the secretory vesicle. Its subcellular location is the synaptic vesicle membrane. It catalyses the reaction S-ubiquitinyl-[E2 ubiquitin-conjugating enzyme]-L-cysteine + [acceptor protein]-L-lysine = [E2 ubiquitin-conjugating enzyme]-L-cysteine + N(6)-ubiquitinyl-[acceptor protein]-L-lysine.. It functions in the pathway protein modification; protein ubiquitination. Its function is as follows. E3 ubiquitin-protein ligase that plays a role in different processes including cell differentiation, receptor recycling or regulation of inflammation. Mediates the ubiquitination of AKT1 and GLUL, thereby playing a role in neuron cells differentiation. Plays a role in the establishment and maintenance of neuronal transmission and plasticity. Regulates Schwann cells differentiation by mediating ubiquitination of GLUL. Promotes neurodegeneration by mediating 'Lys-48'-linked polyubiquitination and subsequent degradation of AKT1 in axons: degradation of AKT1 prevents AKT1-mediated phosphorylation of GSK3B, leading to GSK3B activation and phosphorylation of DPYSL2/CRMP2 followed by destabilization of microtubule assembly in axons. Ubiquitinates the Na(+)/K(+) ATPase alpha-1 subunit/ATP1A1 and thereby influences its endocytosis and/or degradation. Controls ligand-induced EGFR signaling via mediating receptor ubiquitination and recruitment of the ESCRT machinery. Acts as a negative feedback mechanism controlling TLR3 trafficking by mediating TLR3 'Lys-63'-linked polyubiquitination to reduce type I IFN production. Modulates inflammation by promoting caveolin-1/CAV1 ubiquitination and degradation to regulate TLR4-activated immune response. The sequence is that of E3 ubiquitin-protein ligase ZNRF1 (ZNRF1) from Bos taurus (Bovine).